A 582-amino-acid polypeptide reads, in one-letter code: Formate--tetrahydrofolate ligase (582 aa).

65 to 72 (TPLGEGKT) lines the ATP pocket.

This sequence belongs to the formate--tetrahydrofolate ligase family.

The catalysed reaction is (6S)-5,6,7,8-tetrahydrofolate + formate + ATP = (6R)-10-formyltetrahydrofolate + ADP + phosphate. The protein operates within one-carbon metabolism; tetrahydrofolate interconversion. In Vibrio cholerae serotype O1 (strain ATCC 39315 / El Tor Inaba N16961), this protein is Formate--tetrahydrofolate ligase.